We begin with the raw amino-acid sequence, 322 residues long: Fructose-1,6-bisphosphatase class 1 1 (322 aa).

Mg(2+) is bound by residues Glu84, Asp103, Leu105, and Asp106. Residues 106 to 109, Asn198, and Lys264 contribute to the substrate site; that span reads DGSS. Glu270 is a Mg(2+) binding site.

The protein belongs to the FBPase class 1 family. In terms of assembly, homotetramer. It depends on Mg(2+) as a cofactor.

It is found in the cytoplasm. The enzyme catalyses beta-D-fructose 1,6-bisphosphate + H2O = beta-D-fructose 6-phosphate + phosphate. The protein operates within carbohydrate biosynthesis; gluconeogenesis. In Pseudoalteromonas translucida (strain TAC 125), this protein is Fructose-1,6-bisphosphatase class 1 1.